The chain runs to 323 residues: Acetyl-coenzyme A carboxylase carboxyl transferase subunit alpha (323 aa).

Residues arginine 39–glutamine 293 enclose the CoA carboxyltransferase C-terminal domain.

Belongs to the AccA family. As to quaternary structure, acetyl-CoA carboxylase is a heterohexamer composed of biotin carboxyl carrier protein (AccB), biotin carboxylase (AccC) and two subunits each of ACCase subunit alpha (AccA) and ACCase subunit beta (AccD).

The protein resides in the cytoplasm. It catalyses the reaction N(6)-carboxybiotinyl-L-lysyl-[protein] + acetyl-CoA = N(6)-biotinyl-L-lysyl-[protein] + malonyl-CoA. It participates in lipid metabolism; malonyl-CoA biosynthesis; malonyl-CoA from acetyl-CoA: step 1/1. In terms of biological role, component of the acetyl coenzyme A carboxylase (ACC) complex. First, biotin carboxylase catalyzes the carboxylation of biotin on its carrier protein (BCCP) and then the CO(2) group is transferred by the carboxyltransferase to acetyl-CoA to form malonyl-CoA. The polypeptide is Acetyl-coenzyme A carboxylase carboxyl transferase subunit alpha (Cupriavidus metallidurans (strain ATCC 43123 / DSM 2839 / NBRC 102507 / CH34) (Ralstonia metallidurans)).